Consider the following 193-residue polypeptide: MEEIKVHIGKTVALMNDNIDTDQIIPKSFLKRIERTGFGEFLFDSWRYLPNRKPNPDFPLNAPDRQEATILITGDNFGCGSSREHAAWALLDYRFRVIIAGSYSDIFYMNCTKNGVLPIVLPREAREKLAKIAADENVTIDLPNQQVISSVGTYPFEIDATWKNKFINGLDDIAITFEHIDAIKAYEQKVDSI.

This sequence belongs to the LeuD family. LeuD type 1 subfamily. Heterodimer of LeuC and LeuD.

The catalysed reaction is (2R,3S)-3-isopropylmalate = (2S)-2-isopropylmalate. It participates in amino-acid biosynthesis; L-leucine biosynthesis; L-leucine from 3-methyl-2-oxobutanoate: step 2/4. Its function is as follows. Catalyzes the isomerization between 2-isopropylmalate and 3-isopropylmalate, via the formation of 2-isopropylmaleate. This is 3-isopropylmalate dehydratase small subunit from Listeria monocytogenes serotype 4b (strain CLIP80459).